The primary structure comprises 236 residues: Thiamine import ATP-binding protein ThiQ (236 aa).

The ABC transporter domain occupies 2 to 230; it reads LKLEKITYLY…SAAKASVLGI (229 aa). 32 to 39 lines the ATP pocket; it reads GPSGAGKS.

It belongs to the ABC transporter superfamily. Thiamine importer (TC 3.A.1.19.1) family. The complex is composed of two ATP-binding proteins (ThiQ), two transmembrane proteins (ThiP) and a solute-binding protein (ThiB).

Its subcellular location is the cell inner membrane. It catalyses the reaction thiamine(out) + ATP + H2O = thiamine(in) + ADP + phosphate + H(+). In terms of biological role, part of the ABC transporter complex ThiBPQ involved in thiamine import. Responsible for energy coupling to the transport system. The polypeptide is Thiamine import ATP-binding protein ThiQ (Yersinia pestis bv. Antiqua (strain Antiqua)).